The following is a 239-amino-acid chain: MNSLYTAEGVMDKHSLWQRYVPLVRHEALRLQVRLPASVELDDLLQAGGIGLLNAVDRYDALQGTAFTTYAVQRIRGAMLDELRSRDWVPRSVRRNAREVAQAMGQLEQELGRNATETEVAERLGIPVAEYRQMLLDTNNSQLFSYDEWREEHGDSIELVTEEHQQENPLHQLLEGDLRQRVMDAIESLPEREQLVLTLYYQEELNLKEIGAVLEVGESRVSQLHSQAIKRLRTKLGKL.

The sigma-70 factor domain-2 stretch occupies residues 16 to 88; the sequence is LWQRYVPLVR…MLDELRSRDW (73 aa). Residues 43–46 carry the Interaction with polymerase core subunit RpoC motif; that stretch reads DLLQ. The tract at residues 96–166 is sigma-70 factor domain-3; the sequence is NAREVAQAMG…IELVTEEHQQ (71 aa). The interval 185–233 is sigma-70 factor domain-4; the sequence is AIESLPEREQLVLTLYYQEELNLKEIGAVLEVGESRVSQLHSQAIKRLR. The H-T-H motif DNA-binding region spans 207 to 226; it reads LKEIGAVLEVGESRVSQLHS.

It belongs to the sigma-70 factor family. FliA subfamily.

The protein resides in the cytoplasm. In terms of biological role, sigma factors are initiation factors that promote the attachment of RNA polymerase to specific initiation sites and are then released. This sigma factor controls the expression of flagella-related genes. This Salmonella typhi protein is RNA polymerase sigma factor FliA.